Consider the following 322-residue polypeptide: UDP-N-acetylenolpyruvoylglucosamine reductase (322 aa).

An FAD-binding PCMH-type domain is found at 36–202; the sequence is RAGGPAQVLF…TSVLFEGVPG (167 aa). Residue Arg182 is part of the active site. The Proton donor role is filled by Ser231. Glu301 is a catalytic residue.

This sequence belongs to the MurB family. FAD is required as a cofactor.

It localises to the cytoplasm. It carries out the reaction UDP-N-acetyl-alpha-D-muramate + NADP(+) = UDP-N-acetyl-3-O-(1-carboxyvinyl)-alpha-D-glucosamine + NADPH + H(+). It participates in cell wall biogenesis; peptidoglycan biosynthesis. Functionally, cell wall formation. The protein is UDP-N-acetylenolpyruvoylglucosamine reductase of Brucella abortus (strain S19).